The primary structure comprises 557 residues: Membrane protein insertase YidC (557 aa).

The chain crosses the membrane as a helical span at residues I7–Y27. A disordered region spans residues A42–A77. Positions G52–A77 are enriched in polar residues. A run of 3 helical transmembrane segments spans residues W370–A390, L436–L456, and P514–V534.

The protein belongs to the OXA1/ALB3/YidC family. Type 1 subfamily. As to quaternary structure, interacts with the Sec translocase complex via SecD. Specifically interacts with transmembrane segments of nascent integral membrane proteins during membrane integration.

It localises to the cell inner membrane. In terms of biological role, required for the insertion and/or proper folding and/or complex formation of integral membrane proteins into the membrane. Involved in integration of membrane proteins that insert both dependently and independently of the Sec translocase complex, as well as at least some lipoproteins. Aids folding of multispanning membrane proteins. This Azotobacter vinelandii (strain DJ / ATCC BAA-1303) protein is Membrane protein insertase YidC.